A 380-amino-acid polypeptide reads, in one-letter code: Flap endonuclease 1 (380 aa).

Residues 1–105 (MGIKGLAQVL…GELAKRVARH (105 aa)) are N-domain. Residue Asp-34 participates in Mg(2+) binding. DNA-binding residues include Arg-47 and Arg-71. Residues Asp-87, Glu-159, Glu-161, Asp-180, and Asp-182 each contribute to the Mg(2+) site. An I-domain region spans residues 123-254 (MVDRFAKRTV…ARAVELIRQY (132 aa)). Glu-159 is a DNA binding site. Residues Gly-232 and Asp-234 each contribute to the DNA site. Asp-234 serves as a coordination point for Mg(2+). Residues 337 to 345 (PQGRLDSFF) form an interaction with PCNA region. The interval 340-380 (RLDSFFKPVPSSPKKPVDTKSKGSAKRKRDSNKGGESKKKR) is disordered. The segment covering 342–353 (DSFFKPVPSSPK) has biased composition (low complexity). Ser-350 and Ser-351 each carry phosphoserine. Positions 370 to 380 (SNKGGESKKKR) are enriched in basic and acidic residues.

This sequence belongs to the XPG/RAD2 endonuclease family. FEN1 subfamily. In terms of assembly, interacts with PCNA. Three molecules of rad2 bind to one PCNA trimer with each molecule binding to one PCNA monomer. PCNA stimulates the nuclease activity without altering cleavage specificity. Requires Mg(2+) as cofactor. In terms of processing, phosphorylated. Phosphorylation upon DNA damage induces relocalization to the nuclear plasma.

The protein resides in the nucleus. The protein localises to the nucleolus. It is found in the nucleoplasm. It localises to the mitochondrion. Functionally, structure-specific nuclease with 5'-flap endonuclease and 5'-3' exonuclease activities involved in DNA replication and repair. During DNA replication, cleaves the 5'-overhanging flap structure that is generated by displacement synthesis when DNA polymerase encounters the 5'-end of a downstream Okazaki fragment. It enters the flap from the 5'-end and then tracks to cleave the flap base, leaving a nick for ligation. Also involved in the long patch base excision repair (LP-BER) pathway, by cleaving within the apurinic/apyrimidinic (AP) site-terminated flap. Acts as a genome stabilization factor that prevents flaps from equilibrating into structures that lead to duplications and deletions. Also possesses 5'-3' exonuclease activity on nicked or gapped double-stranded DNA, and exhibits RNase H activity. Also involved in replication and repair of rDNA and in repairing mitochondrial DNA. This is Flap endonuclease 1 from Schizosaccharomyces pombe (strain 972 / ATCC 24843) (Fission yeast).